Here is a 428-residue protein sequence, read N- to C-terminus: Glutamate-1-semialdehyde 2,1-aminomutase (428 aa).

Lys265 is modified (N6-(pyridoxal phosphate)lysine).

This sequence belongs to the class-III pyridoxal-phosphate-dependent aminotransferase family. HemL subfamily. In terms of assembly, homodimer. The cofactor is pyridoxal 5'-phosphate.

The protein resides in the cytoplasm. It carries out the reaction (S)-4-amino-5-oxopentanoate = 5-aminolevulinate. It participates in porphyrin-containing compound metabolism; protoporphyrin-IX biosynthesis; 5-aminolevulinate from L-glutamyl-tRNA(Glu): step 2/2. This Proteus mirabilis (strain HI4320) protein is Glutamate-1-semialdehyde 2,1-aminomutase.